The sequence spans 633 residues: Chaperone protein DnaK (633 aa).

The residue at position 198 (Thr198) is a Phosphothreonine; by autocatalysis.

Belongs to the heat shock protein 70 family.

Its function is as follows. Acts as a chaperone. The chain is Chaperone protein DnaK from Rhodopseudomonas palustris (strain HaA2).